The primary structure comprises 824 residues: Probable receptor-like protein kinase At5g24010 (824 aa).

A signal peptide spans 1-24 (MAFPINLTQTLLFFFCPLLHLSFA). 5 N-linked (GlcNAc...) asparagine glycosylation sites follow: Asn6, Asn41, Asn204, Asn227, and Asn291. Topologically, residues 25-406 (AFTPTDNYLI…SSEVVSGKRN (382 aa)) are extracellular. The chain crosses the membrane as a helical span at residues 407–427 (VVWIVVGSVLGGFVFLSLFFL). Residues 428 to 824 (SVLCLCRRKN…FSQLMTNAGR (397 aa)) are Cytoplasmic-facing. Residues 440–467 (TRSSESTGWTPLRRFRGSSNSRTTERTV) form a disordered region. Polar residues predominate over residues 456–467 (GSSNSRTTERTV). In terms of domain architecture, Protein kinase spans 489–764 (FDRSLVIGVG…VLWNLEHVLQ (276 aa)). ATP contacts are provided by residues 495–503 (IGVGGFGMV) and Lys517. Residue Asp613 is the Proton acceptor of the active site. The interval 777–803 (DYGDVTDPRTARQGLSNGSNIERDYGD) is disordered.

Belongs to the protein kinase superfamily. Ser/Thr protein kinase family.

It localises to the membrane. This Arabidopsis thaliana (Mouse-ear cress) protein is Probable receptor-like protein kinase At5g24010.